A 717-amino-acid polypeptide reads, in one-letter code: Ribosomal RNA large subunit methyltransferase K/L (717 aa).

The THUMP domain maps to 44-155; it reads DAYKVCIYSY…KQFVNVFLCL (112 aa).

This sequence belongs to the methyltransferase superfamily. RlmKL family.

It is found in the cytoplasm. It carries out the reaction guanosine(2445) in 23S rRNA + S-adenosyl-L-methionine = N(2)-methylguanosine(2445) in 23S rRNA + S-adenosyl-L-homocysteine + H(+). The enzyme catalyses guanosine(2069) in 23S rRNA + S-adenosyl-L-methionine = N(2)-methylguanosine(2069) in 23S rRNA + S-adenosyl-L-homocysteine + H(+). Functionally, specifically methylates the guanine in position 2445 (m2G2445) and the guanine in position 2069 (m7G2069) of 23S rRNA. The protein is Ribosomal RNA large subunit methyltransferase K/L of Francisella tularensis subsp. tularensis (strain WY96-3418).